The sequence spans 430 residues: Adenylosuccinate synthetase (430 aa).

Residues 12–18 and 40–42 contribute to the GTP site; these read GDEGKGK and GHT. Aspartate 13 serves as the catalytic Proton acceptor. Mg(2+) contacts are provided by aspartate 13 and glycine 40. Residues 13–16, 38–41, threonine 130, arginine 144, glutamine 224, threonine 239, and arginine 303 contribute to the IMP site; these read DEGK and NAGH. The Proton donor role is filled by histidine 41. A substrate-binding site is contributed by 299–305; that stretch reads VNTGRKR. GTP-binding positions include arginine 305, 331-333, and 413-415; these read KLD and STS.

This sequence belongs to the adenylosuccinate synthetase family. In terms of assembly, homodimer. Requires Mg(2+) as cofactor.

It is found in the cytoplasm. The catalysed reaction is IMP + L-aspartate + GTP = N(6)-(1,2-dicarboxyethyl)-AMP + GDP + phosphate + 2 H(+). The protein operates within purine metabolism; AMP biosynthesis via de novo pathway; AMP from IMP: step 1/2. Its function is as follows. Plays an important role in the de novo pathway of purine nucleotide biosynthesis. Catalyzes the first committed step in the biosynthesis of AMP from IMP. In Rhodopseudomonas palustris (strain TIE-1), this protein is Adenylosuccinate synthetase.